The following is a 471-amino-acid chain: Trigger factor (471 aa).

Positions 165 to 244 constitute a PPIase FKBP-type domain; it reads GDFVSIDLRA…VQSVKERVLP (80 aa). Residues 407–471 are disordered; it reads VTDASGNPVD…EATAEDPAKS (65 aa). Over residues 416-443 the composition is skewed to acidic residues; the sequence is DLEELVGGTEEDDVTEDATEDVTEDAAP.

This sequence belongs to the FKBP-type PPIase family. Tig subfamily.

Its subcellular location is the cytoplasm. The enzyme catalyses [protein]-peptidylproline (omega=180) = [protein]-peptidylproline (omega=0). In terms of biological role, involved in protein export. Acts as a chaperone by maintaining the newly synthesized protein in an open conformation. Functions as a peptidyl-prolyl cis-trans isomerase. This chain is Trigger factor, found in Kineococcus radiotolerans (strain ATCC BAA-149 / DSM 14245 / SRS30216).